The sequence spans 249 residues: MKLFVVLACLAAPGTFPFVDAATVIPANSFSSFSTYWNNFYPWGTDHNGSGRMASANIIVASNTLSLIATPTSNPSPPTSTSNPKPAIHYASGAIHAKEHITVTAANAYTVSGEFSAPTAVGTWPAFWLTAVSGWPPEVDIGEWKGTADNWFNTFNTSSVVKSTLVDWPTDLSFHSVKAVLTAQSNNKDVKIDFYMDNKFIVTQYGSGFVGKAMYLIINLQMEGSSGSPGPSGRTVYKARNVQVTRTGN.

A signal peptide spans 1–21; that stretch reads MKLFVVLACLAAPGTFPFVDA. In terms of domain architecture, GH16 spans 34-247; the sequence is STYWNNFYPW…KARNVQVTRT (214 aa). Residue Asn48 is glycosylated (N-linked (GlcNAc...) asparagine). The active-site Nucleophile is the Glu138. Glu143 functions as the Proton donor in the catalytic mechanism. N-linked (GlcNAc...) asparagine glycosylation is present at Asn156.

The protein belongs to the glycosyl hydrolase 16 family. Post-translationally, N-glycosylated.

It catalyses the reaction The enzyme specifically hydrolyzes beta-1,3-galactan and beta-1,3-galactooligosaccharides.. Its function is as follows. Specifically hydrolyzes beta-1,3-galactan in an endo-fashion. Requires at least 3 contiguous beta-1,3-residues. The polypeptide is Galactan endo-beta-1,3-galactanase (EN3GAL) (Flammulina velutipes (Agaricus velutipes)).